A 196-amino-acid polypeptide reads, in one-letter code: Proteasome subunit beta 1 (196 aa).

The propeptide at 1-6 (MEELPA) is removed in mature form; by autocatalysis. Thr-7 acts as the Nucleophile in catalysis.

It belongs to the peptidase T1B family. In terms of assembly, the 20S proteasome core is composed of 14 alpha and 14 beta subunits that assemble into four stacked heptameric rings, resulting in a barrel-shaped structure. The two inner rings, each composed of seven catalytic beta subunits, are sandwiched by two outer rings, each composed of seven alpha subunits. The catalytic chamber with the active sites is on the inside of the barrel. Has a gated structure, the ends of the cylinder being occluded by the N-termini of the alpha-subunits. Is capped at one or both ends by the proteasome regulatory ATPase, PAN.

It is found in the cytoplasm. It catalyses the reaction Cleavage of peptide bonds with very broad specificity.. Its activity is regulated as follows. The formation of the proteasomal ATPase PAN-20S proteasome complex, via the docking of the C-termini of PAN into the intersubunit pockets in the alpha-rings, triggers opening of the gate for substrate entry. Interconversion between the open-gate and close-gate conformations leads to a dynamic regulation of the 20S proteasome proteolysis activity. In terms of biological role, component of the proteasome core, a large protease complex with broad specificity involved in protein degradation. In Saccharolobus islandicus (strain Y.N.15.51 / Yellowstone #2) (Sulfolobus islandicus), this protein is Proteasome subunit beta 1.